The sequence spans 270 residues: MLRKVFYISDGTAITAEVFGHAVLSQFPVEFEALTIPFVETESKANEVKAQINDCFITTGERPLVFHSIVKAEIRDIIYSSEGLDYDFLNTFVAPLEQQLGISATPVVHRTHGNMNESYEARIDAINYAMDNDDGQTLKHIDKADLVLLGVSRCGKTPSSLYLSMQFGIKAANYPFVEDDMDNLKLPDALKKNKSKLFGLTIDPVRLHEIRQSRMENSRYSSLRQCRIEVKEVEMMYKRERIPFVNTTNHSVEEIATKILAMTGLERHMF.

Position 150 to 157 (150 to 157 (GVSRCGKT)) interacts with ADP.

The protein belongs to the pyruvate, phosphate/water dikinase regulatory protein family. PSRP subfamily.

It catalyses the reaction [pyruvate, water dikinase] + ADP = [pyruvate, water dikinase]-phosphate + AMP + H(+). The catalysed reaction is [pyruvate, water dikinase]-phosphate + phosphate + H(+) = [pyruvate, water dikinase] + diphosphate. In terms of biological role, bifunctional serine/threonine kinase and phosphorylase involved in the regulation of the phosphoenolpyruvate synthase (PEPS) by catalyzing its phosphorylation/dephosphorylation. This is Putative phosphoenolpyruvate synthase regulatory protein from Shewanella woodyi (strain ATCC 51908 / MS32).